Consider the following 82-residue polypeptide: uncharacterized protein (82 aa).

Positions 1-11 (MKARGSRENAS) are enriched in basic and acidic residues. The tract at residues 1 to 25 (MKARGSRENASKRRPSQTQYDTHLR) is disordered. Polar residues predominate over residues 16–25 (SQTQYDTHLR).

This is an uncharacterized protein from Human cytomegalovirus (strain AD169) (HHV-5).